We begin with the raw amino-acid sequence, 277 residues long: Phosphatidylglycerol--prolipoprotein diacylglyceryl transferase (277 aa).

The next 4 helical transmembrane spans lie at 18–38 (ISVK…LLLA), 51–71 (IIVD…RIYY), 89–109 (IWHG…TAII), and 116–136 (ISFW…QAIG). Arginine 137 contributes to the a 1,2-diacyl-sn-glycero-3-phospho-(1'-sn-glycerol) binding site. 3 helical membrane-spanning segments follow: residues 177-197 (QPTF…LLII), 205-225 (GELF…IEGM), and 235-255 (FRVS…IIIY).

This sequence belongs to the Lgt family.

The protein localises to the cell membrane. It carries out the reaction L-cysteinyl-[prolipoprotein] + a 1,2-diacyl-sn-glycero-3-phospho-(1'-sn-glycerol) = an S-1,2-diacyl-sn-glyceryl-L-cysteinyl-[prolipoprotein] + sn-glycerol 1-phosphate + H(+). It functions in the pathway protein modification; lipoprotein biosynthesis (diacylglyceryl transfer). Functionally, catalyzes the transfer of the diacylglyceryl group from phosphatidylglycerol to the sulfhydryl group of the N-terminal cysteine of a prolipoprotein, the first step in the formation of mature lipoproteins. The chain is Phosphatidylglycerol--prolipoprotein diacylglyceryl transferase from Listeria monocytogenes serotype 4b (strain CLIP80459).